Consider the following 533-residue polypeptide: Metal transporter nramp1 homolog (533 aa).

A disordered region spans residues 1–33 (MTPRIESEESAPLVNKNNNNNNDNNNNNNVDEE). Residues 1-68 (MTPRIESEES…PNIDKPDSKW (68 aa)) lie on the Cytoplasmic side of the membrane. The span at 14-29 (VNKNNNNNNDNNNNNN) shows a compositional bias: low complexity. Residues 69–89 (INFKTLWAFTGPGFLMSIAYL) traverse the membrane as a helical segment. Topologically, residues 90 to 101 (DPGNLESDIQAG) are extracellular. Residues 102-122 (AMAGYQLLWVLFWSTVIGFWL) form a helical membrane-spanning segment. Residues 123–158 (QMLASRLGVVTGKHLAEHCREQYPKTPRLLLWLMTE) lie on the Cytoplasmic side of the membrane. Residues 159–179 (LAIIGSDIQEVIGTAIALQIL) form a helical membrane-spanning segment. Residues 180–182 (SNG) lie on the Extracellular side of the membrane. Residues 183–203 (HIPLWAGVLFTAADTFTFLFL) form a helical membrane-spanning segment. Residues 204-212 (EKYGIRKLE) are Cytoplasmic-facing. A helical transmembrane segment spans residues 213–233 (AFFCSLIAIMAISFGVEYIIS). The Extracellular segment spans residues 234 to 256 (KPDQIEVVKGVFIPLCSQNNISQ). The N-linked (GlcNAc...) asparagine glycan is linked to Asn-253. Residues 257–277 (AVGILGAVVMPHNIYLHSALV) form a helical membrane-spanning segment. The Cytoplasmic segment spans residues 278–302 (QSREIDRKSETQVKIANKYNRLESA). Residues 303 to 323 (FALIISFIINLLLVSVFAKGF) form a helical membrane-spanning segment. Residues 324-348 (YGETTEIGLSSAADFLMDKYGKVAK) are Extracellular-facing. The helical transmembrane segment at 349-368 (YIWAIGLFSAGQCSTMTGTY) threads the bilayer. Topologically, residues 369–387 (SGQFVMEGFLKLKIAPWKR) are cytoplasmic. A helical transmembrane segment spans residues 388–408 (LLITRCTAIVPAMVVAILSTS). Over 409-415 (HLDSLDQ) the chain is Extracellular. The chain crosses the membrane as a helical span at residues 416–436 (WLNILQSIQLPFAVVPVLLFT). The Cytoplasmic segment spans residues 437 to 457 (SSEKIMGSKFKNHWLNNQFVR). Residues 458–478 (FLSLLIIAINIYLIITFSMQI) traverse the membrane as a helical segment. Residues 479 to 481 (SES) are Extracellular-facing. The chain crosses the membrane as a helical span at residues 482–502 (AWMISIVSISFFFYFIFIVYL). Residues 503 to 533 (SMGQENFNSMTKKIKNLFNNNSNQTYNNINY) are Cytoplasmic-facing.

This sequence belongs to the NRAMP family.

The protein resides in the membrane. Functionally, depletes iron from the phagolysosome in an ATP-dependent process. May rather act as a symporter of protons and metal cations in an ATP-dependent process. Nramp1 overexpression protected cells from L.pneumophila infection. The polypeptide is Metal transporter nramp1 homolog (nramp1) (Dictyostelium discoideum (Social amoeba)).